The primary structure comprises 80 residues: Metallothionein-like protein type 2, MT2-22 (80 aa).

This sequence belongs to the metallothionein superfamily. Type 15 family.

Functionally, metallothioneins have a high content of cysteine residues that bind various heavy metals. This Brassica juncea (Indian mustard) protein is Metallothionein-like protein type 2, MT2-22.